The chain runs to 257 residues: 3-methyl-2-oxobutanoate hydroxymethyltransferase (257 aa).

2 residues coordinate Mg(2+): Asp44 and Asp83. 3-methyl-2-oxobutanoate contacts are provided by residues 44 to 45, Asp83, and Lys113; that span reads DS. Glu115 provides a ligand contact to Mg(2+). Residue Glu182 is the Proton acceptor of the active site.

It belongs to the PanB family. In terms of assembly, homodecamer; pentamer of dimers. Mg(2+) serves as cofactor.

The protein localises to the cytoplasm. The catalysed reaction is 3-methyl-2-oxobutanoate + (6R)-5,10-methylene-5,6,7,8-tetrahydrofolate + H2O = 2-dehydropantoate + (6S)-5,6,7,8-tetrahydrofolate. It functions in the pathway cofactor biosynthesis; (R)-pantothenate biosynthesis; (R)-pantoate from 3-methyl-2-oxobutanoate: step 1/2. Catalyzes the reversible reaction in which hydroxymethyl group from 5,10-methylenetetrahydrofolate is transferred onto alpha-ketoisovalerate to form ketopantoate. The chain is 3-methyl-2-oxobutanoate hydroxymethyltransferase from Rippkaea orientalis (strain PCC 8801 / RF-1) (Cyanothece sp. (strain PCC 8801)).